We begin with the raw amino-acid sequence, 89 residues long: Small ribosomal subunit protein uS15 (89 aa).

This sequence belongs to the universal ribosomal protein uS15 family. In terms of assembly, part of the 30S ribosomal subunit. Forms a bridge to the 50S subunit in the 70S ribosome, contacting the 23S rRNA.

In terms of biological role, one of the primary rRNA binding proteins, it binds directly to 16S rRNA where it helps nucleate assembly of the platform of the 30S subunit by binding and bridging several RNA helices of the 16S rRNA. Forms an intersubunit bridge (bridge B4) with the 23S rRNA of the 50S subunit in the ribosome. The chain is Small ribosomal subunit protein uS15 from Nostoc punctiforme (strain ATCC 29133 / PCC 73102).